Reading from the N-terminus, the 194-residue chain is Fe/S biogenesis protein NfuA (194 aa).

The [4Fe-4S] cluster site is built by cysteine 152 and cysteine 155.

The protein belongs to the NfuA family. In terms of assembly, homodimer. [4Fe-4S] cluster serves as cofactor.

In terms of biological role, involved in iron-sulfur cluster biogenesis. Binds a 4Fe-4S cluster, can transfer this cluster to apoproteins, and thereby intervenes in the maturation of Fe/S proteins. Could also act as a scaffold/chaperone for damaged Fe/S proteins. The polypeptide is Fe/S biogenesis protein NfuA (Pseudomonas putida (strain GB-1)).